Reading from the N-terminus, the 338-residue chain is tRNA-specific 2-thiouridylase MnmA (338 aa).

Residues 6–13 and M32 contribute to the ATP site; that span reads AMSGGVDS. The Nucleophile role is filled by C92. Residues C92 and C186 are joined by a disulfide bond. G116 is an ATP binding site. The segment at 134-136 is interaction with tRNA; that stretch reads KDQ. C186 acts as the Cysteine persulfide intermediate in catalysis. An interaction with tRNA region spans residues 288–289; that stretch reads RY.

The protein belongs to the MnmA/TRMU family.

The protein resides in the cytoplasm. The catalysed reaction is S-sulfanyl-L-cysteinyl-[protein] + uridine(34) in tRNA + AH2 + ATP = 2-thiouridine(34) in tRNA + L-cysteinyl-[protein] + A + AMP + diphosphate + H(+). Catalyzes the 2-thiolation of uridine at the wobble position (U34) of tRNA, leading to the formation of s(2)U34. The protein is tRNA-specific 2-thiouridylase MnmA of Campylobacter jejuni subsp. jejuni serotype O:6 (strain 81116 / NCTC 11828).